The chain runs to 103 residues: Conantokin-Br (103 aa).

The signal sequence occupies residues 1–21 (MQLYTYLYLLVPLVTFHLILG). A propeptide spanning residues 22–79 (TGTLDHGGALTERRSTDATALKPEPVLQKSAARSTDDNGKDRLTQMKRILKKRGKNAR) is cleaved from the precursor. Residues 34–64 (RRSTDATALKPEPVLQKSAARSTDDNGKDRL) are disordered. Residues 55 to 64 (STDDNGKDRL) are compositionally biased toward basic and acidic residues. 4 positions are modified to 4-carboxyglutamate: Glu82, Glu83, Glu89, and Glu93. Residues Glu89 and Glu93 each contribute to the a divalent metal cation site.

It belongs to the conotoxin B superfamily. Requires Ca(2+) as cofactor. Mg(2+) is required as a cofactor. As to expression, expressed by the venom duct.

It localises to the secreted. Conantokins inhibit N-methyl-D-aspartate (NMDA) receptors. This toxin inhibits NR2 subunits N-methyl-D-aspartate (NMDA) receptor-mediated calcium influx in central nervous system neurons in the following order of preference: NR2B/GRIN2B (IC(50)=0.14 uM), NR2D/GRIN2D (IC(50)=0.31 uM), NR2A/GRIN2A (IC(50)=0.68 uM) and NR2C/GRIN2A (IC(50)=4.9 uM), when tested on rat receptors. This is Conantokin-Br from Conus sulcatus (Sulcate cone).